A 560-amino-acid polypeptide reads, in one-letter code: Transcription termination factor 5, mitochondrial (560 aa).

Residues methionine 1 to methionine 23 constitute a mitochondrion transit peptide. The tract at residues methionine 23–glutamate 47 is disordered.

This sequence belongs to the mTERF family. Probably binds to the mTTF-DNA complex.

Its subcellular location is the mitochondrion. Binds promoter DNA and regulates initiation of transcription. Regulates mitochondrial replication and transcription. Required for normal topology and maintenance of mitochondrial DNA (mtDNA) levels. Regulates mtDNA replication by re-activating replication after replication pausing. Likely to regulate replication pausing by coordinating with the mitochondrial termination factor mTTF which promotes replication pausing. Their function in replication pausing prevents unregulated replication that may occur for example by collisions between the machineries of DNA replication and transcription during mtDNA synthesis. This ensures the incorporation of RNA transcripts into replication intermediates at the replication fork and allows for proper fork progression. Possibly functions downstream of Dref which activates genes involved in mtDNA replication and maintenance. This chain is Transcription termination factor 5, mitochondrial, found in Drosophila melanogaster (Fruit fly).